The chain runs to 142 residues: Large ribosomal subunit protein uL23 (142 aa).

Belongs to the universal ribosomal protein uL23 family.

The polypeptide is Large ribosomal subunit protein uL23 (RPL25) (Kluyveromyces lactis (strain ATCC 8585 / CBS 2359 / DSM 70799 / NBRC 1267 / NRRL Y-1140 / WM37) (Yeast)).